The following is a 98-amino-acid chain: Small ribosomal subunit protein uS17 (98 aa).

Belongs to the universal ribosomal protein uS17 family. In terms of assembly, part of the 30S ribosomal subunit.

One of the primary rRNA binding proteins, it binds specifically to the 5'-end of 16S ribosomal RNA. In Leptothrix cholodnii (strain ATCC 51168 / LMG 8142 / SP-6) (Leptothrix discophora (strain SP-6)), this protein is Small ribosomal subunit protein uS17.